A 613-amino-acid chain; its full sequence is Ribosome-associated molecular chaperone SSB1 (613 aa).

The interval 1 to 391 (MADGVFQGAI…ILTGQSTSDE (391 aa)) is nucleotide binding domain (NBD). Residues 16 to 18 (TTY), lysine 73, 205 to 207 (GGT), 271 to 278 (ERAKRTLS), and glycine 342 each bind ATP. The interval 392 to 402 (TKDLLLLDVAP) is inter-domain linker. The interval 403–613 (LSLGVGMQGD…RVVTKAMSSR (211 aa)) is substrate binding domain (SBD). Residues 516-612 (SEDIEKMVNQ…KRVVTKAMSS (97 aa)) form a lid domain (SBDalpha) region. The Nuclear export signal motif lies at 574 to 582 (IEAALADAL).

The protein belongs to the heat shock protein 70 family. Ssb-type Hsp70 subfamily. Binds to ribosomes. Binds close to the ribosomal tunnel exit via contacts with both ribosomal proteins and rRNA. Directly interacts with nascent polypeptides. This interaction is dependent on the ribosome-associated complex (RAC). Interacts with SSE1. Interacts with FES1.

It is found in the cytoplasm. It carries out the reaction ATP + H2O = ADP + phosphate + H(+). Ribosome-bound, Hsp70-type chaperone that assists in the cotranslational folding of newly synthesized proteins in the cytosol. Stimulates folding by interacting with nascent chains, binding to short, largely hydrophobic sequences exposed by unfolded proteins, thereby stabilizing longer, more slowly translated, and aggregation-prone nascent polypeptides and domains that cannot fold stably until fully synthesized. The Hsp70-protein substrate interaction depends on ATP-binding and on allosteric regulation between the NBD and the SBD. The ATP-bound state is characterized by a fast exchange rate of substrate (low affinity state), while in the ADP-bound state exchange is much slower (high affinity state). During the Hsp70 cycle, the chaperone switches between the ATP-bound state (open conformation) and the ADP-bound state (closed conformation) by major conformational rearrangements involving mainly the lid domain. Ssb cooperates with a specific Hsp40/Hsp70 co-chaperone termed the ribosome-associated complex (RAC), which stimulates the ATPase activity of the ribosome-associated pool of Ssbs and switches it to the high affinity substrate binding state. Hsp110 chaperone SSE1 and FES1 act as nucleotide exchange factors that cause substrate release. In Nakaseomyces delphensis (Yeast), this protein is Ribosome-associated molecular chaperone SSB1 (SSB1).